The following is a 206-amino-acid chain: dCTP deaminase, dUMP-forming (206 aa).

Residues 117–122, Asp-135, 143–145, Gln-163, Tyr-177, Lys-184, and Gln-188 contribute to the dCTP site; these read RSSFGR and TLE. Glu-145 serves as the catalytic Proton donor/acceptor.

The protein belongs to the dCTP deaminase family. As to quaternary structure, homotrimer.

It catalyses the reaction dCTP + 2 H2O = dUMP + NH4(+) + diphosphate. It participates in pyrimidine metabolism; dUMP biosynthesis; dUMP from dCTP: step 1/1. Its function is as follows. Bifunctional enzyme that catalyzes both the deamination of dCTP to dUTP and the hydrolysis of dUTP to dUMP without releasing the toxic dUTP intermediate. The protein is dCTP deaminase, dUMP-forming of Methanococcus maripaludis (strain C5 / ATCC BAA-1333).